Reading from the N-terminus, the 155-residue chain is uncharacterized protein (155 aa).

Over residues 1 to 14 (MLTLSGWITTQVPP) the composition is skewed to polar residues. Residues 1-44 (MLTLSGWITTQVPPSSRAAADAKAARTGTAEQAEDPAAGTDAAD) form a disordered region. A compositionally biased stretch (low complexity) spans 17 to 30 (RAAADAKAARTGTA).

This is an uncharacterized protein from Pseudomonas aeruginosa (strain ATCC 15692 / DSM 22644 / CIP 104116 / JCM 14847 / LMG 12228 / 1C / PRS 101 / PAO1).